Reading from the N-terminus, the 233-residue chain is Putative glutathione peroxidase 7, chloroplastic (233 aa).

The N-terminal 69 residues, 1–69 (MAFSYASFST…KSKNFSVYAR (69 aa)), are a transit peptide targeting the chloroplast. C108 is an active-site residue.

It belongs to the glutathione peroxidase family.

Its subcellular location is the plastid. The protein localises to the chloroplast. The enzyme catalyses 2 glutathione + H2O2 = glutathione disulfide + 2 H2O. May constitute a glutathione peroxidase-like protective system against oxidative stresses. This is Putative glutathione peroxidase 7, chloroplastic (GPX7) from Arabidopsis thaliana (Mouse-ear cress).